The following is a 217-amino-acid chain: Ribosomal RNA small subunit methyltransferase G (217 aa).

S-adenosyl-L-methionine is bound by residues glycine 79, phenylalanine 84, alanine 130–glutamate 131, and arginine 148.

It belongs to the methyltransferase superfamily. RNA methyltransferase RsmG family.

The protein localises to the cytoplasm. The enzyme catalyses guanosine(527) in 16S rRNA + S-adenosyl-L-methionine = N(7)-methylguanosine(527) in 16S rRNA + S-adenosyl-L-homocysteine. Specifically methylates the N7 position of guanine in position 527 of 16S rRNA. This Myxococcus xanthus (strain DK1622) protein is Ribosomal RNA small subunit methyltransferase G.